The chain runs to 475 residues: Ammonium transporter 2 (475 aa).

11 helical membrane-spanning segments follow: residues 27–47 (AATL…ASIV), 55–75 (SAFM…LLCY), 120–140 (LVYF…GSVL), 148–168 (WMAF…YSIW), 183–203 (GGYV…YWVG), 218–238 (VLLM…FNGG), 254–274 (TNLS…IFFG), 279–299 (IGAI…AGLI), 302–322 (WAAI…MMII), 336–356 (LAVF…TGLF), and 389–409 (AGAA…LLAI).

The protein belongs to the ammonia transporter channel (TC 1.A.11.2) family. As to expression, higher expression in shoots than roots.

It is found in the cell membrane. In terms of biological role, high affinity ammonium transporter that may play an important role in moving ammonium between the apoplast and symplast of cells throughout the plant. Does not transport methylammonium. The sequence is that of Ammonium transporter 2 (AMT2) from Arabidopsis thaliana (Mouse-ear cress).